The chain runs to 294 residues: Protein PET54 (294 aa).

It is found in the mitochondrion inner membrane. In terms of biological role, activator of specific mitochondrial mRNAs. PET54 is involved in the excision of intron aI5-beta from pre-mRNA for cytochrome c oxidase I (COX1) and plays a role in promoting the translation of COX3. The polypeptide is Protein PET54 (PET54) (Saccharomyces bayanus (Yeast)).